The chain runs to 336 residues: Biotin synthase (336 aa).

In terms of domain architecture, Radical SAM core spans 54–281 (NAIQLSTLLS…KAMVRLSAGR (228 aa)). Residues Cys69, Cys73, and Cys76 each coordinate [4Fe-4S] cluster. Residues Cys113, Cys144, Cys204, and Arg276 each contribute to the [2Fe-2S] cluster site.

The protein belongs to the radical SAM superfamily. Biotin synthase family. Homodimer. [4Fe-4S] cluster is required as a cofactor. It depends on [2Fe-2S] cluster as a cofactor.

It catalyses the reaction (4R,5S)-dethiobiotin + (sulfur carrier)-SH + 2 reduced [2Fe-2S]-[ferredoxin] + 2 S-adenosyl-L-methionine = (sulfur carrier)-H + biotin + 2 5'-deoxyadenosine + 2 L-methionine + 2 oxidized [2Fe-2S]-[ferredoxin]. It participates in cofactor biosynthesis; biotin biosynthesis; biotin from 7,8-diaminononanoate: step 2/2. Its function is as follows. Catalyzes the conversion of dethiobiotin (DTB) to biotin by the insertion of a sulfur atom into dethiobiotin via a radical-based mechanism. This Burkholderia pseudomallei (strain 1106a) protein is Biotin synthase.